Here is a 314-residue protein sequence, read N- to C-terminus: Methionyl-tRNA formyltransferase (314 aa).

Position 113-116 (113-116 (SLLP)) interacts with (6S)-5,6,7,8-tetrahydrofolate.

The protein belongs to the Fmt family.

The enzyme catalyses L-methionyl-tRNA(fMet) + (6R)-10-formyltetrahydrofolate = N-formyl-L-methionyl-tRNA(fMet) + (6S)-5,6,7,8-tetrahydrofolate + H(+). In terms of biological role, attaches a formyl group to the free amino group of methionyl-tRNA(fMet). The formyl group appears to play a dual role in the initiator identity of N-formylmethionyl-tRNA by promoting its recognition by IF2 and preventing the misappropriation of this tRNA by the elongation apparatus. In Chlorobaculum tepidum (strain ATCC 49652 / DSM 12025 / NBRC 103806 / TLS) (Chlorobium tepidum), this protein is Methionyl-tRNA formyltransferase.